We begin with the raw amino-acid sequence, 172 residues long: Adenine phosphoribosyltransferase (172 aa).

Belongs to the purine/pyrimidine phosphoribosyltransferase family. As to quaternary structure, homodimer.

It is found in the cytoplasm. It catalyses the reaction AMP + diphosphate = 5-phospho-alpha-D-ribose 1-diphosphate + adenine. Its pathway is purine metabolism; AMP biosynthesis via salvage pathway; AMP from adenine: step 1/1. In terms of biological role, catalyzes a salvage reaction resulting in the formation of AMP, that is energically less costly than de novo synthesis. This chain is Adenine phosphoribosyltransferase, found in Staphylococcus carnosus (strain TM300).